Reading from the N-terminus, the 395-residue chain is Chorismate synthase (395 aa).

NADP(+) contacts are provided by Arg-40 and Arg-46. The tract at residues 99–120 is disordered; it reads PREGRNAPLSRPRPGHADLTGM. FMN is bound by residues 134–136, 256–257, Gly-301, 316–320, and Arg-342; these read RSS, QA, and KPIPS.

It belongs to the chorismate synthase family. Homotetramer. FMNH2 serves as cofactor.

The catalysed reaction is 5-O-(1-carboxyvinyl)-3-phosphoshikimate = chorismate + phosphate. It participates in metabolic intermediate biosynthesis; chorismate biosynthesis; chorismate from D-erythrose 4-phosphate and phosphoenolpyruvate: step 7/7. Its function is as follows. Catalyzes the anti-1,4-elimination of the C-3 phosphate and the C-6 proR hydrogen from 5-enolpyruvylshikimate-3-phosphate (EPSP) to yield chorismate, which is the branch point compound that serves as the starting substrate for the three terminal pathways of aromatic amino acid biosynthesis. This reaction introduces a second double bond into the aromatic ring system. The protein is Chorismate synthase of Bifidobacterium longum (strain DJO10A).